A 452-amino-acid chain; its full sequence is MTDNQYATEELNQLQKELVAKNPIDVLQFCANYFNSKLELQRSQLWQQQNKAKAAGINLFPSIDNVFNSDGGAIMTTNKRQPSFKSPFGDNDPTSIDHHHDDDPKEAPGASKQQNKAELFKGGFGVGKSTPSKPLQELDPNDPSHSASQDTDAAPPVPKSKIPVAFNANRRTSVSAEAMNPNKFKSDSWKPPINDLTAAQKVELSKTLGSNFLFRQLDVSSKKTVIEALGKKEFKNGDEIIKQGDEGDYFYIIEKGTVDFYVNGNQVNSSGEGSSFGELALMYNSPRAATAVAASDTGVTCWALDRQTFRRILLERTFNRRLMYEDFLKDVKVLSSLSSQERSKLADALSTEIYHKGDKIVKEGEQGENFYFIESGSCQVSKDGKGVLTKLSKGDYFGEVALLNDLPRQATVEALDTVIVATLGKSGFSRLLGPAVDILKSQDPTANQGSSN.

The dimerization and phosphorylation stretch occupies residues 28 to 212; the sequence is QFCANYFNSK…ELSKTLGSNF (185 aa). Residues 74 to 163 form a disordered region; sequence IMTTNKRQPS…APPVPKSKIP (90 aa). Polar residues predominate over residues 75–84; that stretch reads MTTNKRQPSF. A compositionally biased stretch (basic and acidic residues) spans 95–106; it reads SIDHHHDDDPKE. Serine 173 carries the post-translational modification Phosphoserine. A nucleoside 3',5'-cyclic phosphate-binding positions include 213 to 330 and 333 to 451; these read LFRQ…FLKD and VLSS…QGSS. Positions 278, 287, 399, and 408 each coordinate 3',5'-cyclic AMP.

The protein belongs to the cAMP-dependent kinase regulatory chain family. In terms of assembly, tetramer, composed of 2 regulatory (R) and 2 catalytic (C) subunits. In the presence of cAMP it dissociates into 2 active monomeric C subunits and an R dimer.

The polypeptide is cAMP-dependent protein kinase regulatory subunit (PKAR) (Debaryomyces hansenii (strain ATCC 36239 / CBS 767 / BCRC 21394 / JCM 1990 / NBRC 0083 / IGC 2968) (Yeast)).